The chain runs to 609 residues: Glutamine--fructose-6-phosphate aminotransferase [isomerizing] (609 aa).

C2 serves as the catalytic Nucleophile; for GATase activity. One can recognise a Glutamine amidotransferase type-2 domain in the interval 2-218 (CGIVGAIAQR…EGDIAEITRR (217 aa)). SIS domains follow at residues 286–426 (ADEL…LKGL) and 458–599 (LAED…VDQP). K604 acts as the For Fru-6P isomerization activity in catalysis.

Homodimer. In pull-down experiments interacts with CedA.

The protein resides in the cytoplasm. It carries out the reaction D-fructose 6-phosphate + L-glutamine = D-glucosamine 6-phosphate + L-glutamate. Catalyzes the first step in hexosamine metabolism, converting fructose-6P into glucosamine-6P using glutamine as a nitrogen source. The chain is Glutamine--fructose-6-phosphate aminotransferase [isomerizing] (glmS) from Escherichia coli (strain K12).